Here is a 242-residue protein sequence, read N- to C-terminus: Probable transcriptional regulatory protein STH1004 (242 aa).

The protein belongs to the TACO1 family.

The protein resides in the cytoplasm. In Symbiobacterium thermophilum (strain DSM 24528 / JCM 14929 / IAM 14863 / T), this protein is Probable transcriptional regulatory protein STH1004.